Reading from the N-terminus, the 181-residue chain is Beta-lactoglobulin-2 (181 aa).

An N-terminal signal peptide occupies residues 1 to 18 (MKCLLLALGLSLMCGNQA). Cystine bridges form between Cys-84/Cys-179 and Cys-124/Cys-138.

Belongs to the calycin superfamily. Lipocalin family. As to quaternary structure, monomer.

It localises to the secreted. In terms of biological role, lactoglobulin is the primary component of whey, it binds retinol and is probably involved in the transport of that molecule. This chain is Beta-lactoglobulin-2 (LGB2), found in Equus caballus (Horse).